The chain runs to 163 residues: 2-C-methyl-D-erythritol 2,4-cyclodiphosphate synthase (163 aa).

The a divalent metal cation site is built by D9 and H11. Residues 9 to 11 (DVH) and 36 to 37 (HS) contribute to the 4-CDP-2-C-methyl-D-erythritol 2-phosphate site. Position 44 (H44) interacts with a divalent metal cation. 4-CDP-2-C-methyl-D-erythritol 2-phosphate contacts are provided by residues 58-60 (DIG), 63-67 (FPDDD), 134-137 (TTSE), F141, and R144.

It belongs to the IspF family. In terms of assembly, homotrimer. A divalent metal cation serves as cofactor.

It carries out the reaction 4-CDP-2-C-methyl-D-erythritol 2-phosphate = 2-C-methyl-D-erythritol 2,4-cyclic diphosphate + CMP. It functions in the pathway isoprenoid biosynthesis; isopentenyl diphosphate biosynthesis via DXP pathway; isopentenyl diphosphate from 1-deoxy-D-xylulose 5-phosphate: step 4/6. Functionally, involved in the biosynthesis of isopentenyl diphosphate (IPP) and dimethylallyl diphosphate (DMAPP), two major building blocks of isoprenoid compounds. Catalyzes the conversion of 4-diphosphocytidyl-2-C-methyl-D-erythritol 2-phosphate (CDP-ME2P) to 2-C-methyl-D-erythritol 2,4-cyclodiphosphate (ME-CPP) with a corresponding release of cytidine 5-monophosphate (CMP). The sequence is that of 2-C-methyl-D-erythritol 2,4-cyclodiphosphate synthase from Halorhodospira halophila (strain DSM 244 / SL1) (Ectothiorhodospira halophila (strain DSM 244 / SL1)).